Here is a 435-residue protein sequence, read N- to C-terminus: Hexane cyclase xenF (435 aa).

A signal peptide spans 1–23 (MSPAANMFRTLTLTALVSAVVSA). Residues Asn-81 and Asn-156 are each glycosylated (N-linked (GlcNAc...) asparagine).

This sequence belongs to the Diels-Alderase family.

The protein operates within mycotoxin biosynthesis. In terms of biological role, hexane cyclase; part of the gene cluster that mediates the biosynthesis of xenoacremones such as xenoacremone A, a compound that shows inhibitory activity toward the PI3K/AKT signaling pathway and which has the ability to induce apoptosis of A549 lung cancer cells. Within the pathway, cooperation of the hybrid PKS-NRPS xenE and the trans-acting enoyl reductase xenG is responsible for the formation of the reduced tyrosine-nonaketide derivative. The alpha/beta hydrolase xenA then accelerates intramolecular nucleophilic attack to give a pyrrolidone derivative. Subsequently, three enzymes, xenF, xenD, and xenC, coordinately participate in the conversion to xenoacremone B. XenF catalyzes sigmatropic rearrangement to form an A-ring, which leads to an unusual intermediate with a hexane ring, which is required for the formation of the tricarbocyclic product. Epoxidation catalyzed by xenD and the formation of the paracyclophane ether catalyzed by xenC initiate a spontaneous intramolecular Diels-Alder (IMDA) reaction to yield xenoacremone B. Spontaneous hydration of xenoacremone B leads to the formation of xenoacremone A, which undergoes subsequent methylation to afford xenoacremone C. The sequence is that of Hexane cyclase xenF from Xenoacremonium sinensis (Endophyte fungus).